Reading from the N-terminus, the 206-residue chain is Cell division protein SepF (206 aa).

Residues 31 to 53 (EEKERRKTERQEQRQAVKQEKRT) show a composition bias toward basic and acidic residues. Residues 31-81 (EEKERRKTERQEQRQAVKQEKRTFPSQRPAFSEEAPTSSSSKLSAASGSSD) are disordered. Residues 60–80 (AFSEEAPTSSSSKLSAASGSS) show a composition bias toward low complexity.

The protein belongs to the SepF family. Homodimer. Interacts with FtsZ.

Its subcellular location is the cytoplasm. Cell division protein that is part of the divisome complex and is recruited early to the Z-ring. Probably stimulates Z-ring formation, perhaps through the cross-linking of FtsZ protofilaments. Its function overlaps with FtsA. The chain is Cell division protein SepF from Lachnoclostridium phytofermentans (strain ATCC 700394 / DSM 18823 / ISDg) (Clostridium phytofermentans).